The following is a 281-amino-acid chain: Nucleoid occlusion protein (281 aa).

The segment at 1–26 is disordered; that stretch reads MKHPFSRLFSFGEKEQEEAGGKQERE. Over residues 12–26 the composition is skewed to basic and acidic residues; that stretch reads GEKEQEEAGGKQERE. Positions 145–164 form a DNA-binding region, H-T-H motif; it reads EALAQRLGKGQSTIANKLRL.

It belongs to the ParB family.

The protein localises to the cytoplasm. Its subcellular location is the nucleoid. Functionally, effects nucleoid occlusion by binding relatively nonspecifically to DNA and preventing the assembly of the division machinery in the vicinity of the nucleoid, especially under conditions that disturb the cell cycle. It helps to coordinate cell division and chromosome segregation by preventing the formation of the Z ring through the nucleoid, which would cause chromosome breakage. This is Nucleoid occlusion protein from Geobacillus thermodenitrificans (strain NG80-2).